The sequence spans 414 residues: 2,3-bisphosphoglycerate-independent phosphoglycerate mutase (414 aa).

The protein belongs to the BPG-independent phosphoglycerate mutase family. A-PGAM subfamily.

The catalysed reaction is (2R)-2-phosphoglycerate = (2R)-3-phosphoglycerate. It participates in carbohydrate degradation; glycolysis; pyruvate from D-glyceraldehyde 3-phosphate: step 3/5. Its function is as follows. Catalyzes the interconversion of 2-phosphoglycerate and 3-phosphoglycerate. This is 2,3-bisphosphoglycerate-independent phosphoglycerate mutase from Saccharolobus islandicus (strain L.S.2.15 / Lassen #1) (Sulfolobus islandicus).